The chain runs to 496 residues: RNA-binding motif protein, Y chromosome, family 1 member E (496 aa).

The region spanning 8–85 (GKLFIGGLNR…KAIKVEQAKK (78 aa)) is the RRM domain. Disordered stretches follow at residues 67-348 (DMNG…PHRD) and 453-496 (DQRN…SSRY). Composition is skewed to low complexity over residues 97-114 (PASS…SARG) and 149-159 (PVKRGPSSRSG). Over residues 175-184 (NSWMGSQGPM) the composition is skewed to polar residues. Basic and acidic residues-rich tracts occupy residues 204 to 214 (RNDRMSTRHDG), 242 to 253 (DNGHSNRDEHSS), 276 to 289 (AYRD…DESY), 313 to 326 (GYRD…HESY), 335 to 348 (SSRE…PHRD), and 484 to 496 (GESR…SSRY).

Interacts with splicing factor proteins SFRS3/SRP20, TRA2B/SFRS10, KHDRBS1/SAM68 and KHDRBS3. In terms of tissue distribution, testis-specific.

The protein resides in the nucleus. Functionally, RNA-binding protein which may be involved in spermatogenesis. Required for sperm development, possibly by participating in pre-mRNA splicing in the testis. This Homo sapiens (Human) protein is RNA-binding motif protein, Y chromosome, family 1 member E (RBMY1E).